The primary structure comprises 435 residues: uncharacterized protein (435 aa).

Transmembrane regions (helical) follow at residues 40-60, 103-123, 133-153, 195-215, 226-246, 313-333, 358-378, 381-401, and 414-434; these read LVSTWLVVWGIWHVYFVEAVF, VLWTSITVWLIALAVVVWLIL, IMLALLVPVLPFAFSYAIYNP, LIHEAIPLEFALGAVLAIIVL, ICTALAIGPGTVSVLLLAVVG, VAVVGFRALFGAFLLGLLFFV, LALPVLASALLVPLFITAVDW, WWVMITLDVAIVYILYAIDRP, and VFVCVVLVLAVIPTGSANNIG.

The protein localises to the cell membrane. This is an uncharacterized protein from Mycobacterium bovis (strain ATCC BAA-935 / AF2122/97).